Here is a 270-residue protein sequence, read N- to C-terminus: UPF0354 protein BC_4690 (270 aa).

This sequence belongs to the UPF0354 family.

This chain is UPF0354 protein BC_4690, found in Bacillus cereus (strain ATCC 14579 / DSM 31 / CCUG 7414 / JCM 2152 / NBRC 15305 / NCIMB 9373 / NCTC 2599 / NRRL B-3711).